Reading from the N-terminus, the 898-residue chain is Eukaryotic translation initiation factor 3 subunit C (898 aa).

The span at 1–10 (MSRFFHAKED) shows a compositional bias: basic and acidic residues. 2 disordered regions span residues 1–38 (MSRFFHAKEDSDSDTSSSEDEVEDQKVNKSAKFRDDLD) and 162–238 (VTDY…SVTK). A compositionally biased stretch (acidic residues) spans 11–23 (SDSDTSSSEDEVE). The span at 24 to 37 (DQKVNKSAKFRDDL) shows a compositional bias: basic and acidic residues. The segment covering 170-187 (DEDGYETPEDEDDDDFGE) has biased composition (acidic residues). Residues 189–202 (SESKAEKSPGKPSE) are compositionally biased toward basic and acidic residues. Positions 209-218 (SDSDSDDDDS) are enriched in acidic residues. Low complexity predominate over residues 219–228 (SNWSSEPESN). The 177-residue stretch at 630–806 (YHMHINVELM…DCLIMHRVEP (177 aa)) folds into the PCI domain. The tract at residues 829–898 (QILEPRTGRG…RRHPQKPRAF (70 aa)) is disordered. 2 stretches are compositionally biased toward basic and acidic residues: residues 850-859 (RNERQGDKQK) and 866-878 (GERRGGQGQDGKR). Residues 888 to 898 (QRRHPQKPRAF) are compositionally biased toward basic residues.

The protein belongs to the eIF-3 subunit C family. Component of the eukaryotic translation initiation factor 3 (eIF-3) complex.

The protein localises to the cytoplasm. In terms of biological role, component of the eukaryotic translation initiation factor 3 (eIF-3) complex, which is involved in protein synthesis of a specialized repertoire of mRNAs and, together with other initiation factors, stimulates binding of mRNA and methionyl-tRNAi to the 40S ribosome. The eIF-3 complex specifically targets and initiates translation of a subset of mRNAs involved in cell proliferation. This chain is Eukaryotic translation initiation factor 3 subunit C, found in Caenorhabditis elegans.